The sequence spans 326 residues: Pectate lyase plyB (326 aa).

The N-terminal stretch at 1–15 (MRFTPLFLLAAVAIA) is a signal peptide. 3 residues coordinate Ca(2+): Asp-133, Asp-162, and Asp-166. Arg-219 is a catalytic residue.

The protein belongs to the polysaccharide lyase 1 family. Ca(2+) is required as a cofactor.

Its subcellular location is the secreted. The catalysed reaction is Eliminative cleavage of (1-&gt;4)-alpha-D-galacturonan to give oligosaccharides with 4-deoxy-alpha-D-galact-4-enuronosyl groups at their non-reducing ends.. Its pathway is glycan metabolism; pectin degradation; 2-dehydro-3-deoxy-D-gluconate from pectin: step 2/5. Its function is as follows. Pectinolytic enzyme consist of four classes of enzymes: pectin lyase, polygalacturonase, pectin methylesterase and rhamnogalacturonase. Among pectinolytic enzymes, pectin lyase is the most important in depolymerization of pectin, since it cleaves internal glycosidic bonds of highly methylated pectins. This chain is Pectate lyase plyB (plyB), found in Emericella nidulans (strain FGSC A4 / ATCC 38163 / CBS 112.46 / NRRL 194 / M139) (Aspergillus nidulans).